A 41-amino-acid polypeptide reads, in one-letter code: DYDWSLRGPPKCATYGQKCRTWSPPNCCWNLRCKAFRCRPR.

Disulfide bonds link C12/C28, C19/C33, and C27/C38.

Granular hemocytes, small secretory granules.

The protein localises to the secreted. Functionally, binds to chitin. Shows strong activity against E.coli (IC(50) is 1.2 ug/ml). Is also very active against S.aureus (IC(50) is 0.8 ug/ml), C.albicans (IC(50) is 0.9 ug/ml) and P.pastoris (IC(50) is 0.3 ug/ml). Binds to chitin (5.2 uM are required to obtain 50% of binding). Causes hemolysis on sheep erythrocytes, probably by forming ion-permeable pores. This chain is Tachystatin-C, found in Tachypleus tridentatus (Japanese horseshoe crab).